Consider the following 353-residue polypeptide: Photosystem II protein D1 (353 aa).

Thr2 is subject to N-acetylthreonine. At Thr2 the chain carries Phosphothreonine. 3 consecutive transmembrane segments (helical) span residues 29–46, 118–133, and 142–156; these read YIGWFGVLMIPTLLTATS, HFLLGVACYMGREWEL, and WIAVAYSAPVAAATA. His118 lines the chlorophyll a pocket. Tyr126 serves as a coordination point for pheophytin a. [CaMn4O5] cluster contacts are provided by Asp170 and Glu189. Residues 197–218 form a helical membrane-spanning segment; it reads FHMLGVAGVFGGSLFSAMHGSL. His198 contacts chlorophyll a. Residues His215 and 264 to 265 contribute to the a quinone site; that span reads SF. His215 is a binding site for Fe cation. His272 is a Fe cation binding site. A helical transmembrane segment spans residues 274–288; that stretch reads FLAAWPVAGIWFTAL. [CaMn4O5] cluster is bound by residues His332, Glu333, Asp342, and Ala344. A propeptide spanning residues 345-353 is cleaved from the precursor; it reads AVESISIGG.

This sequence belongs to the reaction center PufL/M/PsbA/D family. PSII is composed of 1 copy each of membrane proteins PsbA, PsbB, PsbC, PsbD, PsbE, PsbF, PsbH, PsbI, PsbJ, PsbK, PsbL, PsbM, PsbT, PsbX, PsbY, PsbZ, Psb30/Ycf12, at least 3 peripheral proteins of the oxygen-evolving complex and a large number of cofactors. It forms dimeric complexes. Requires The D1/D2 heterodimer binds P680, chlorophylls that are the primary electron donor of PSII, and subsequent electron acceptors. It shares a non-heme iron and each subunit binds pheophytin, quinone, additional chlorophylls, carotenoids and lipids. D1 provides most of the ligands for the Mn4-Ca-O5 cluster of the oxygen-evolving complex (OEC). There is also a Cl(-1) ion associated with D1 and D2, which is required for oxygen evolution. The PSII complex binds additional chlorophylls, carotenoids and specific lipids. as cofactor. In terms of processing, tyr-161 forms a radical intermediate that is referred to as redox-active TyrZ, YZ or Y-Z. Post-translationally, C-terminally processed by CTPA; processing is essential to allow assembly of the oxygen-evolving complex and thus photosynthetic growth.

It localises to the plastid. The protein localises to the chloroplast thylakoid membrane. The enzyme catalyses 2 a plastoquinone + 4 hnu + 2 H2O = 2 a plastoquinol + O2. Functionally, photosystem II (PSII) is a light-driven water:plastoquinone oxidoreductase that uses light energy to abstract electrons from H(2)O, generating O(2) and a proton gradient subsequently used for ATP formation. It consists of a core antenna complex that captures photons, and an electron transfer chain that converts photonic excitation into a charge separation. The D1/D2 (PsbA/PsbD) reaction center heterodimer binds P680, the primary electron donor of PSII as well as several subsequent electron acceptors. This Pinus contorta (Shore pine) protein is Photosystem II protein D1.